The following is a 359-amino-acid chain: 3-dehydroquinate synthase (359 aa).

Residues 70–75, 105–109, 129–130, Lys-142, Lys-151, and 169–172 contribute to the NAD(+) site; these read DGEQYK, GVIGD, TT, and FYKT. Zn(2+)-binding residues include Glu-184, His-247, and His-264.

This sequence belongs to the sugar phosphate cyclases superfamily. Dehydroquinate synthase family. The cofactor is Co(2+). Zn(2+) is required as a cofactor. NAD(+) serves as cofactor.

The protein resides in the cytoplasm. It carries out the reaction 7-phospho-2-dehydro-3-deoxy-D-arabino-heptonate = 3-dehydroquinate + phosphate. The protein operates within metabolic intermediate biosynthesis; chorismate biosynthesis; chorismate from D-erythrose 4-phosphate and phosphoenolpyruvate: step 2/7. Its function is as follows. Catalyzes the conversion of 3-deoxy-D-arabino-heptulosonate 7-phosphate (DAHP) to dehydroquinate (DHQ). This chain is 3-dehydroquinate synthase, found in Francisella tularensis subsp. holarctica (strain FTNF002-00 / FTA).